A 364-amino-acid polypeptide reads, in one-letter code: Putative serine/threonine-protein phosphatase C06A1.3 (364 aa).

Residues 1–24 (MSTDGNNNKKGSKEGPKSSEISKF) form a disordered region. Residues 11–24 (GSKEGPKSSEISKF) are compositionally biased toward basic and acidic residues. Residues Asp-93, His-95, Asp-121, and Asn-153 each contribute to the Mn(2+) site. His-154 acts as the Proton donor in catalysis. Residues His-202 and His-277 each contribute to the Mn(2+) site.

The protein belongs to the PPP phosphatase family. PP-1 subfamily. Requires Mn(2+) as cofactor.

It catalyses the reaction O-phospho-L-seryl-[protein] + H2O = L-seryl-[protein] + phosphate. It carries out the reaction O-phospho-L-threonyl-[protein] + H2O = L-threonyl-[protein] + phosphate. The polypeptide is Putative serine/threonine-protein phosphatase C06A1.3 (Caenorhabditis elegans).